Reading from the N-terminus, the 329-residue chain is Ketol-acid reductoisomerase (NADP(+)) (329 aa).

The region spanning Thr2–Thr182 is the KARI N-terminal Rossmann domain. NADP(+)-binding positions include Tyr25–Gln28, Ser51, Ser53, and Asp83–Gln86. The active site involves His108. Position 134 (Gly134) interacts with NADP(+). In terms of domain architecture, KARI C-terminal knotted spans Asn183 to Leu328. Mg(2+) is bound by residues Asp191, Glu195, Glu227, and Glu231. Residue Ser252 coordinates substrate.

Belongs to the ketol-acid reductoisomerase family. The cofactor is Mg(2+).

It catalyses the reaction (2R)-2,3-dihydroxy-3-methylbutanoate + NADP(+) = (2S)-2-acetolactate + NADPH + H(+). It carries out the reaction (2R,3R)-2,3-dihydroxy-3-methylpentanoate + NADP(+) = (S)-2-ethyl-2-hydroxy-3-oxobutanoate + NADPH + H(+). The protein operates within amino-acid biosynthesis; L-isoleucine biosynthesis; L-isoleucine from 2-oxobutanoate: step 2/4. It participates in amino-acid biosynthesis; L-valine biosynthesis; L-valine from pyruvate: step 2/4. Its function is as follows. Involved in the biosynthesis of branched-chain amino acids (BCAA). Catalyzes an alkyl-migration followed by a ketol-acid reduction of (S)-2-acetolactate (S2AL) to yield (R)-2,3-dihydroxy-isovalerate. In the isomerase reaction, S2AL is rearranged via a Mg-dependent methyl migration to produce 3-hydroxy-3-methyl-2-ketobutyrate (HMKB). In the reductase reaction, this 2-ketoacid undergoes a metal-dependent reduction by NADPH to yield (R)-2,3-dihydroxy-isovalerate. The polypeptide is Ketol-acid reductoisomerase (NADP(+)) (Prochlorococcus marinus (strain MIT 9515)).